A 185-amino-acid chain; its full sequence is Ribonuclease M5 1 (185 aa).

The 84-residue stretch at 4 to 87 (KEVIVVEGKD…AFLTKHDAAP (84 aa)) folds into the Toprim domain. Mg(2+)-binding residues include glutamate 10, aspartate 56, and aspartate 58.

Belongs to the ribonuclease M5 family. Requires Mg(2+) as cofactor.

It is found in the cytoplasm. The enzyme catalyses Endonucleolytic cleavage of RNA, removing 21 and 42 nucleotides, respectively, from the 5'- and 3'-termini of a 5S-rRNA precursor.. Its function is as follows. Required for correct processing of both the 5' and 3' ends of 5S rRNA precursor. Cleaves both sides of a double-stranded region yielding mature 5S rRNA in one step. The polypeptide is Ribonuclease M5 1 (Ligilactobacillus salivarius (strain UCC118) (Lactobacillus salivarius)).